The sequence spans 120 residues: Large ribosomal subunit protein uL18 (120 aa).

Belongs to the universal ribosomal protein uL18 family. As to quaternary structure, part of the 50S ribosomal subunit; part of the 5S rRNA/L5/L18/L25 subcomplex. Contacts the 5S and 23S rRNAs.

Its function is as follows. This is one of the proteins that bind and probably mediate the attachment of the 5S RNA into the large ribosomal subunit, where it forms part of the central protuberance. The sequence is that of Large ribosomal subunit protein uL18 from Allorhizobium ampelinum (strain ATCC BAA-846 / DSM 112012 / S4) (Agrobacterium vitis (strain S4)).